Here is a 218-residue protein sequence, read N- to C-terminus: Small ribosomal subunit protein uS3c (218 aa).

Positions 43–118 constitute a KH type-2 domain; it reads IKDYVKKNKK…RLNIAITRIE (76 aa).

The protein belongs to the universal ribosomal protein uS3 family. In terms of assembly, part of the 30S ribosomal subunit.

It localises to the plastid. It is found in the chloroplast. In Phalaenopsis aphrodite subsp. formosana (Moth orchid), this protein is Small ribosomal subunit protein uS3c (rps3).